Here is a 233-residue protein sequence, read N- to C-terminus: MTNHQKRLSVPKSWPVERKTETFTAKAGAGPHGESGVPLVVVLRDVLEYVDDTSEAQYAINTDGVLVNGDSVGDVNRPIGMFDILAFPDRDEYYRVFPDEGGRLGLTEIDADAAGSKLNKVTDKTTVSGGRTQLNFHDGSNLALDEDAYAGGDSVVVDTDTNEIVAHFQYEEGALVTAVAGQHAGDIGEIAEINVQPGSASNTVRVDDENGGFETIAEYVVVIDENFVEEDDE.

Residues 37–99 (VPLVVVLRDV…RDEYYRVFPD (63 aa)) form the S4 RNA-binding domain.

The protein belongs to the eukaryotic ribosomal protein eS4 family.

The sequence is that of Small ribosomal subunit protein eS4 from Halobacterium salinarum (strain ATCC 29341 / DSM 671 / R1).